The primary structure comprises 318 residues: Glutathione synthetase (318 aa).

The region spanning 125–311 (EKLFTAWFPE…ITGKLMDAIE (187 aa)) is the ATP-grasp domain. 151–208 (FRQEHGDIILKPLDGMGGASIFRVKENDPNVSVIIETLTNHGQNYAMAQTFVPDISNG) is an ATP binding site. Residues Glu282 and Asn284 each coordinate Mg(2+).

It belongs to the prokaryotic GSH synthase family. The cofactor is Mg(2+). It depends on Mn(2+) as a cofactor.

The catalysed reaction is gamma-L-glutamyl-L-cysteine + glycine + ATP = glutathione + ADP + phosphate + H(+). It participates in sulfur metabolism; glutathione biosynthesis; glutathione from L-cysteine and L-glutamate: step 2/2. The protein is Glutathione synthetase of Vibrio vulnificus (strain YJ016).